Here is a 524-residue protein sequence, read N- to C-terminus: 2-isopropylmalate synthase (524 aa).

The Pyruvate carboxyltransferase domain occupies V5 to H267. The Mn(2+) site is built by D14, H202, H204, and N238. The tract at residues K392–V524 is regulatory domain.

It belongs to the alpha-IPM synthase/homocitrate synthase family. LeuA type 1 subfamily. In terms of assembly, homodimer. Requires Mn(2+) as cofactor.

It localises to the cytoplasm. The enzyme catalyses 3-methyl-2-oxobutanoate + acetyl-CoA + H2O = (2S)-2-isopropylmalate + CoA + H(+). It participates in amino-acid biosynthesis; L-leucine biosynthesis; L-leucine from 3-methyl-2-oxobutanoate: step 1/4. Its function is as follows. Catalyzes the condensation of the acetyl group of acetyl-CoA with 3-methyl-2-oxobutanoate (2-ketoisovalerate) to form 3-carboxy-3-hydroxy-4-methylpentanoate (2-isopropylmalate). This Aeromonas salmonicida (strain A449) protein is 2-isopropylmalate synthase.